The sequence spans 458 residues: Transmembrane protein 135 (458 aa).

6 helical membrane passes run 68–88, 96–116, 149–169, 298–318, 331–351, and 377–397; these read ILQSASFLTANGALYITFFCI, FYSWTPGFGAALPASYVAILI, TLRNGEVLLFCITAAMYMFFF, FQLGAFLGSFVSIYKGTSCFL, IVAGFLAGVSMMFYKSTTISM, and ADTIIYSISTAICFHAAVMEV.

Belongs to the TMEM135 family.

It localises to the mitochondrion membrane. It is found in the peroxisome membrane. Involved in mitochondrial metabolism by regulating the balance between mitochondrial fusion and fission. May act as a regulator of mitochondrial fission that promotes DNM1L-dependent fission through activation of DNM1L. May be involved in peroxisome organization. The polypeptide is Transmembrane protein 135 (Mus musculus (Mouse)).